Reading from the N-terminus, the 973-residue chain is FHF complex subunit HOOK-interacting protein 1B (973 aa).

Disordered stretches follow at residues 466–493 (SSPS…VVTV), 510–547 (SLGG…PGEL), and 573–647 (SAPY…EGAK). Position 467 is a phosphoserine (Ser-467). The span at 482–493 (SPSVDSSSVVTV) shows a compositional bias: low complexity. Phosphoserine occurs at positions 510, 523, 529, and 533. Composition is skewed to low complexity over residues 529–538 (SPASSPGRRP) and 622–639 (GARE…NGLP). 2 positions are modified to phosphoserine: Ser-859 and Ser-898.

Belongs to the FHIP family. As to quaternary structure, component of the FTS/Hook/FHIP complex (FHF complex), composed of AKTIP/FTS, FHIP1B, and one or more members of the Hook family of proteins HOOK1, HOOK2, and HOOK3. The FHF complex associates with the homotypic vesicular sorting complex (the HOPS complex).

Component of the FTS/Hook/FHIP complex (FHF complex). The FHF complex may function to promote vesicle trafficking and/or fusion via the homotypic vesicular protein sorting complex (the HOPS complex). FHF complex promotes the distribution of AP-4 complex to the perinuclear area of the cell. This is FHF complex subunit HOOK-interacting protein 1B (FHIP1B) from Bos taurus (Bovine).